A 259-amino-acid polypeptide reads, in one-letter code: Bisphosphoglycerate mutase (259 aa).

The residue at position 2 (S2) is an N-acetylserine. K3 and K5 each carry an N-linked (Glc) (glycation) lysine; in vitro glycan. 10 to 17 lines the substrate pocket; the sequence is RHGEGAWN. Residue H11 is the Tele-phosphohistidine intermediate of the active site. The N-linked (Glc) (glycation) lysine; in vitro glycan is linked to K18. 23 to 24 provides a ligand contact to substrate; it reads CS. K43 carries an N-linked (Glc) (glycation) lysine; in vitro glycan. Substrate is bound by residues R62, 89 to 92, R100, and 116 to 117; these read ERHY and RR. E89 functions as the Proton donor/acceptor in the catalytic mechanism. A Phosphothreonine modification is found at T122. N-linked (Glc) (glycation) lysine glycosylation occurs at K159. A substrate-binding site is contributed by 189–190; the sequence is GN. N-linked (Glc) (glycation) lysine; in vitro glycosylation occurs at K197.

The protein belongs to the phosphoglycerate mutase family. BPG-dependent PGAM subfamily. Homodimer. In terms of processing, glycation of Lys-159 in diabetic patients inactivates the enzyme. Expressed in red blood cells. Expressed in non-erythroid cells of the placenta; present in the syncytiotrophoblast layer of the placental villi at the feto-maternal interface (at protein level).

The catalysed reaction is (2R)-3-phospho-glyceroyl phosphate = (2R)-2,3-bisphosphoglycerate + H(+). It catalyses the reaction (2R)-2-phosphoglycerate = (2R)-3-phosphoglycerate. With respect to regulation, at alkaline pH BPGM favors the synthase reaction; however, at lower pH the phosphatase reaction is dominant. Inhibited by citrate. Plays a major role in regulating hemoglobin oxygen affinity by controlling the levels of its allosteric effector 2,3-bisphosphoglycerate (2,3-BPG). Also exhibits mutase (EC 5.4.2.11) activity. This is Bisphosphoglycerate mutase (BPGM) from Homo sapiens (Human).